The chain runs to 143 residues: Flagellar assembly factor FliW (143 aa).

The protein belongs to the FliW family. In terms of assembly, interacts with translational regulator CsrA and flagellin(s).

The protein resides in the cytoplasm. Its function is as follows. Acts as an anti-CsrA protein, binds CsrA and prevents it from repressing translation of its target genes, one of which is flagellin. Binds to flagellin and participates in the assembly of the flagellum. This chain is Flagellar assembly factor FliW, found in Clostridium botulinum (strain Okra / Type B1).